A 593-amino-acid chain; its full sequence is A-type ATP synthase subunit A (593 aa).

Position 236–243 (236–243 (GPFGSGKT)) interacts with ATP.

The protein belongs to the ATPase alpha/beta chains family. As to quaternary structure, has multiple subunits with at least A(3), B(3), C, D, E, F, H, I and proteolipid K(x).

The protein localises to the cell membrane. The enzyme catalyses ATP + H2O + 4 H(+)(in) = ADP + phosphate + 5 H(+)(out). Component of the A-type ATP synthase that produces ATP from ADP in the presence of a proton gradient across the membrane. The A chain is the catalytic subunit. This Pyrobaculum arsenaticum (strain DSM 13514 / JCM 11321 / PZ6) protein is A-type ATP synthase subunit A.